Here is a 386-residue protein sequence, read N- to C-terminus: Succinate--CoA ligase [ADP-forming] subunit beta (386 aa).

One can recognise an ATP-grasp domain in the interval 9 to 244 (KDLLTSYAIP…PSQENVRDVL (236 aa)). ATP is bound by residues K46, 53-55 (GRG), V102, and E107. 2 residues coordinate Mg(2+): N199 and D213. Substrate-binding positions include N264 and 321–323 (GIM).

It belongs to the succinate/malate CoA ligase beta subunit family. Heterotetramer of two alpha and two beta subunits. Mg(2+) is required as a cofactor.

The catalysed reaction is succinate + ATP + CoA = succinyl-CoA + ADP + phosphate. It catalyses the reaction GTP + succinate + CoA = succinyl-CoA + GDP + phosphate. It participates in carbohydrate metabolism; tricarboxylic acid cycle; succinate from succinyl-CoA (ligase route): step 1/1. In terms of biological role, succinyl-CoA synthetase functions in the citric acid cycle (TCA), coupling the hydrolysis of succinyl-CoA to the synthesis of either ATP or GTP and thus represents the only step of substrate-level phosphorylation in the TCA. The beta subunit provides nucleotide specificity of the enzyme and binds the substrate succinate, while the binding sites for coenzyme A and phosphate are found in the alpha subunit. The polypeptide is Succinate--CoA ligase [ADP-forming] subunit beta (Chlamydia abortus (strain DSM 27085 / S26/3) (Chlamydophila abortus)).